The following is a 341-amino-acid chain: Heat-inducible transcription repressor HrcA (341 aa).

This sequence belongs to the HrcA family.

Negative regulator of class I heat shock genes (grpE-dnaK-dnaJ and groELS operons). Prevents heat-shock induction of these operons. The protein is Heat-inducible transcription repressor HrcA of Corynebacterium glutamicum (strain ATCC 13032 / DSM 20300 / JCM 1318 / BCRC 11384 / CCUG 27702 / LMG 3730 / NBRC 12168 / NCIMB 10025 / NRRL B-2784 / 534).